We begin with the raw amino-acid sequence, 311 residues long: Lipoyl synthase (311 aa).

Cys47, Cys52, Cys58, Cys73, Cys77, Cys80, and Ser286 together coordinate [4Fe-4S] cluster. Residues 59–276 (WSRHTATYLA…RSVGESLGLF (218 aa)) enclose the Radical SAM core domain.

The protein belongs to the radical SAM superfamily. Lipoyl synthase family. It depends on [4Fe-4S] cluster as a cofactor.

The protein localises to the cytoplasm. It catalyses the reaction [[Fe-S] cluster scaffold protein carrying a second [4Fe-4S](2+) cluster] + N(6)-octanoyl-L-lysyl-[protein] + 2 oxidized [2Fe-2S]-[ferredoxin] + 2 S-adenosyl-L-methionine + 4 H(+) = [[Fe-S] cluster scaffold protein] + N(6)-[(R)-dihydrolipoyl]-L-lysyl-[protein] + 4 Fe(3+) + 2 hydrogen sulfide + 2 5'-deoxyadenosine + 2 L-methionine + 2 reduced [2Fe-2S]-[ferredoxin]. The protein operates within protein modification; protein lipoylation via endogenous pathway; protein N(6)-(lipoyl)lysine from octanoyl-[acyl-carrier-protein]: step 2/2. In terms of biological role, catalyzes the radical-mediated insertion of two sulfur atoms into the C-6 and C-8 positions of the octanoyl moiety bound to the lipoyl domains of lipoate-dependent enzymes, thereby converting the octanoylated domains into lipoylated derivatives. The protein is Lipoyl synthase of Chlamydia trachomatis serovar D (strain ATCC VR-885 / DSM 19411 / UW-3/Cx).